A 352-amino-acid chain; its full sequence is Anthranilate phosphoribosyltransferase (352 aa).

5-phospho-alpha-D-ribose 1-diphosphate contacts are provided by residues Gly91, 94-95 (GD), Thr99, 101-104 (NIST), 119-127 (KHGNRASSS), and Ser131. Gly91 is a binding site for anthranilate. Mg(2+) is bound at residue Ser103. Residue Asn122 participates in anthranilate binding. Arg177 contributes to the anthranilate binding site. Mg(2+) contacts are provided by Asp235 and Glu236.

This sequence belongs to the anthranilate phosphoribosyltransferase family. In terms of assembly, homodimer. It depends on Mg(2+) as a cofactor.

The catalysed reaction is N-(5-phospho-beta-D-ribosyl)anthranilate + diphosphate = 5-phospho-alpha-D-ribose 1-diphosphate + anthranilate. Its pathway is amino-acid biosynthesis; L-tryptophan biosynthesis; L-tryptophan from chorismate: step 2/5. Functionally, catalyzes the transfer of the phosphoribosyl group of 5-phosphorylribose-1-pyrophosphate (PRPP) to anthranilate to yield N-(5'-phosphoribosyl)-anthranilate (PRA). This is Anthranilate phosphoribosyltransferase from Arthrobacter sp. (strain FB24).